A 94-amino-acid polypeptide reads, in one-letter code: Large ribosomal subunit protein bL27 (94 aa).

A propeptide spanning residues 1–9 (MLRLDLQFF) is cleaved from the precursor.

This sequence belongs to the bacterial ribosomal protein bL27 family. In terms of processing, the N-terminus is cleaved by ribosomal processing cysteine protease Prp.

This Bacillus pumilus (strain SAFR-032) protein is Large ribosomal subunit protein bL27.